The primary structure comprises 107 residues: EMBRYO SURROUNDING FACTOR 1-like protein 5 (107 aa).

A signal peptide spans 1 to 22 (MSLLRFAILCIIFVSLFGVHEC). 4 disulfide bridges follow: Cys-35–Cys-49, Cys-40–Cys-69, Cys-47–Cys-65, and Cys-50–Cys-58. The chain crosses the membrane as a helical span at residues 87–107 (GLGPPIYLFFLGQFIYFVLGL).

It belongs to the MEG family. In terms of tissue distribution, expressed in flowers.

It localises to the membrane. The sequence is that of EMBRYO SURROUNDING FACTOR 1-like protein 5 (ESFL5) from Arabidopsis thaliana (Mouse-ear cress).